A 204-amino-acid chain; its full sequence is GTP cyclohydrolase 1 (204 aa).

Residues cysteine 93, histidine 96, and cysteine 164 each contribute to the Zn(2+) site.

It belongs to the GTP cyclohydrolase I family. Toroid-shaped homodecamer, composed of two pentamers of five dimers.

The catalysed reaction is GTP + H2O = 7,8-dihydroneopterin 3'-triphosphate + formate + H(+). The protein operates within cofactor biosynthesis; 7,8-dihydroneopterin triphosphate biosynthesis; 7,8-dihydroneopterin triphosphate from GTP: step 1/1. The protein is GTP cyclohydrolase 1 of Rhizobium meliloti (strain 1021) (Ensifer meliloti).